Consider the following 862-residue polypeptide: DNA mismatch repair protein MutS (862 aa).

Gly613–Ser620 contributes to the ATP binding site.

This sequence belongs to the DNA mismatch repair MutS family.

Functionally, this protein is involved in the repair of mismatches in DNA. It is possible that it carries out the mismatch recognition step. This protein has a weak ATPase activity. The chain is DNA mismatch repair protein MutS from Desulfitobacterium hafniense (strain Y51).